A 423-amino-acid polypeptide reads, in one-letter code: UPF0229 protein Pmen_4018 (423 aa).

Positions 65-108 are disordered; it reads HHGRGGKQTIVHPGNKEFTAGERIPRPQGGGGGRGSGKASNSGE.

This sequence belongs to the UPF0229 family.

This chain is UPF0229 protein Pmen_4018, found in Ectopseudomonas mendocina (strain ymp) (Pseudomonas mendocina).